The sequence spans 3165 residues: Protein eyes shut homolog (3165 aa).

Positions 1-21 (MTDKSIIILSLMVFHSSFING) are cleaved as a signal peptide. 4 N-linked (GlcNAc...) asparagine glycosylation sites follow: Asn-42, Asn-105, Asn-117, and Asn-166. 3 EGF-like domains span residues 170–212 (KQQF…KYCQ), 213–254 (ELDA…KNCS), and 256–292 (IIVQ…PFCE). 9 disulfides stabilise this stretch: Cys-174/Cys-189, Cys-183/Cys-200, Cys-202/Cys-211, Cys-217/Cys-228, Cys-222/Cys-242, Cys-244/Cys-253, Cys-260/Cys-270, Cys-265/Cys-280, and Cys-282/Cys-291. N-linked (GlcNAc...) asparagine glycans are attached at residues Asn-252, Asn-269, and Asn-272. N-linked (GlcNAc...) asparagine glycans are attached at residues Asn-311 and Asn-343. 2 EGF-like domains span residues 332–368 (DVSE…LLCK) and 370–406 (FQTS…KNCE). 2 disulfide bridges follow: Cys-341-Cys-356 and Cys-358-Cys-367. Residue Asn-382 is glycosylated (N-linked (GlcNAc...) asparagine). Cys-396 and Cys-405 are disulfide-bonded. 5 N-linked (GlcNAc...) asparagine glycosylation sites follow: Asn-506, Asn-520, Asn-521, Asn-566, and Asn-573. 3 EGF-like domains span residues 566-602 (NITD…RLCV), 604-641 (NVDY…NICE), and 643-679 (DIED…TRCE). Disulfide bonds link Cys-592–Cys-601 and Cys-608–Cys-620. N-linked (GlcNAc...) asparagine glycosylation is found at Asn-611 and Asn-628. Cys-629 and Cys-640 are oxidised to a cystine. A glycan (N-linked (GlcNAc...) asparagine) is linked at Asn-654. 4 disulfides stabilise this stretch: Cys-669–Cys-678, Cys-685–Cys-696, Cys-690–Cys-705, and Cys-707–Cys-719. An EGF-like 9; calcium-binding domain is found at 681-720 (DLDECALHPCKSGATCIDQPGNYFCQCGPPFKVVDGFSCL). Residues 733-769 (NIDNCILNAFEHNSTYKDLHLSYQCVCLSGWEGNFCE) form the EGF-like 10 domain. Asn-745 is a glycosylation site (N-linked (GlcNAc...) asparagine). Cystine bridges form between Cys-759/Cys-768, Cys-775/Cys-786, Cys-780/Cys-795, Cys-797/Cys-806, Cys-813/Cys-824, Cys-818/Cys-835, Cys-837/Cys-846, Cys-853/Cys-866, Cys-860/Cys-876, Cys-878/Cys-887, Cys-894/Cys-905, Cys-899/Cys-914, Cys-916/Cys-925, Cys-932/Cys-943, Cys-937/Cys-952, Cys-954/Cys-963, Cys-970/Cys-981, Cys-975/Cys-990, Cys-992/Cys-1001, Cys-1008/Cys-1019, Cys-1013/Cys-1028, Cys-1030/Cys-1039, Cys-1046/Cys-1056, Cys-1051/Cys-1065, Cys-1067/Cys-1076, Cys-1083/Cys-1094, Cys-1088/Cys-1103, Cys-1105/Cys-1114, Cys-1121/Cys-1137, Cys-1131/Cys-1147, Cys-1149/Cys-1158, Cys-1165/Cys-1176, Cys-1170/Cys-1185, and Cys-1187/Cys-1196. Residues 771-807 (ESNECKMNPCKNNSTCTDLYKSYRCECTSGWTGQNCS) form the EGF-like 11; calcium-binding domain. 3 N-linked (GlcNAc...) asparagine glycosylation sites follow: Asn-782, Asn-783, and Asn-805. EGF-like domains follow at residues 809-847 (EINE…QFCH), 849-888 (RYNP…KHCE), and 890-926 (DVKE…SLCE). N-linked (GlcNAc...) asparagine glycosylation is found at Asn-862 and Asn-863. The 37-residue stretch at 928-964 (EINECSSEPCKNNGTCVDLTNRFFCNCEPGYHGPFCE) folds into the EGF-like 15; calcium-binding domain. Asn-940 is a glycosylation site (N-linked (GlcNAc...) asparagine). The region spanning 966–1002 (EVNKCKISPCLDEENCVYRTDRYNCLCAPGYTGINCE) is the EGF-like 16 domain. Positions 1004–1040 (NLDECLSEPCLHDGVCIDGINHYTCDCKSGFFGTHCE) constitute an EGF-like 17; calcium-binding domain. EGF-like domains lie at 1042-1077 (NAND…IQCK), 1079-1115 (KIND…AYCE), and 1117-1159 (SIDN…QFCE). The EGF-like 21; calcium-binding domain maps to 1161 to 1197 (NINECSSSPCLHGANCEDHINGYVCKCQPGWSGHHCE). 4 N-linked (GlcNAc...) asparagine glycosylation sites follow: Asn-1509, Asn-1906, Asn-1941, and Asn-2033. Positions 1883–2063 (FSCVCYYGDS…AVRNYHINNC (181 aa)) constitute a Laminin G-like 1 domain. 4 disulfide bridges follow: Cys-2037-Cys-2063, Cys-2103-Cys-2114, Cys-2108-Cys-2128, and Cys-2130-Cys-2139. The region spanning 2099–2140 (APSVCQEDVCHNGGTCRPIFLSSGIVSFQCDCPLHFTGRFCE) is the EGF-like 22 domain. The Laminin G-like 2 domain occupies 2145 to 2339 (LFFPSFSGNS…NIENCHVPWC (195 aa)). Residues Asn-2170, Asn-2185, and Asn-2228 are each glycosylated (N-linked (GlcNAc...) asparagine). 6 disulfide bridges follow: Cys-2308-Cys-2339, Cys-2339-Cys-2350, Cys-2344-Cys-2359, Cys-2375-Cys-2386, Cys-2380-Cys-2396, and Cys-2398-Cys-2407. 2 EGF-like domains span residues 2335 to 2368 (HVPW…YSGK) and 2371 to 2408 (QFAS…PLCT). Asn-2347 carries an N-linked (GlcNAc...) asparagine glycan. N-linked (GlcNAc...) asparagine glycosylation is found at Asn-2412, Asn-2453, Asn-2484, Asn-2506, and Asn-2532. The Laminin G-like 3 domain occupies 2419-2609 (SGTDAFGYTS…PNAGRSVGQC (191 aa)). Disulfide bonds link Cys-2576-Cys-2609, Cys-2614-Cys-2625, and Cys-2619-Cys-2634. EGF-like domains follow at residues 2610 to 2646 (HASP…AFCT) and 2648 to 2689 (TVSI…IYCE). A glycan (N-linked (GlcNAc...) asparagine) is linked at Asn-2635. 4 disulfides stabilise this stretch: Cys-2636–Cys-2645, Cys-2652–Cys-2668, Cys-2662–Cys-2677, and Cys-2679–Cys-2688. Positions 2717–2895 (DPSFRSSELS…AKGGSNVGDC (179 aa)) constitute a Laminin G-like 4 domain. Asn-2775, Asn-2800, and Asn-2824 each carry an N-linked (GlcNAc...) asparagine glycan. 4 disulfide bridges follow: Cys-2868/Cys-2895, Cys-2900/Cys-2911, Cys-2905/Cys-2920, and Cys-2922/Cys-2931. EGF-like domains are found at residues 2896–2932 (DGTA…NICN) and 2933–2970 (QSAY…RYCE). Residue Asn-2914 is glycosylated (N-linked (GlcNAc...) asparagine). Asn-2932 carries N-linked (GlcNAc...) asparagine glycosylation. Cystine bridges form between Cys-2937/Cys-2948, Cys-2942/Cys-2958, and Cys-2960/Cys-2969. Asn-2971, Asn-3006, Asn-3036, Asn-3057, Asn-3073, and Asn-3082 each carry an N-linked (GlcNAc...) asparagine glycan. The region spanning 2975 to 3165 (FTTAKFMGNS…YDGDEQNEVT (191 aa)) is the Laminin G-like 5 domain.

Belongs to the EYS family. As to expression, expressed in retina (at protein level).

It is found in the cell projection. The protein localises to the cilium. It localises to the photoreceptor outer segment. The protein resides in the cytoplasm. Its subcellular location is the cytoskeleton. It is found in the cilium axoneme. The protein localises to the microtubule organizing center. It localises to the centrosome. The protein resides in the secreted. Its subcellular location is the extracellular space. It is found in the extracellular matrix. The protein localises to the interphotoreceptor matrix. In terms of biological role, required to maintain the integrity of photoreceptor cells. Specifically required for normal morphology of the photoreceptor ciliary pocket, and might thus facilitate protein trafficking between the photoreceptor inner and outer segments via the transition zone. This Macaca fascicularis (Crab-eating macaque) protein is Protein eyes shut homolog.